The primary structure comprises 84 residues: Acetylcholine receptor subunit alpha (84 aa).

Cystine bridges form between cysteine 7/cysteine 21 and cysteine 71/cysteine 72. The N-linked (GlcNAc...) asparagine glycan is linked to asparagine 20.

Belongs to the ligand-gated ion channel (TC 1.A.9) family. Acetylcholine receptor (TC 1.A.9.1) subfamily. Alpha-1/CHRNA1 sub-subfamily. One of the alpha chains that assemble within the acetylcholine receptor, a pentamer of two alpha chains, a beta, a delta, and a gamma (in immature muscle) or epsilon (in mature muscle) chains. The muscle heteropentamer composed of alpha-1, beta-1, delta, epsilon subunits interacts with the alpha-conotoxin ImII.

Its subcellular location is the postsynaptic cell membrane. It localises to the cell membrane. It catalyses the reaction K(+)(in) = K(+)(out). The catalysed reaction is Na(+)(in) = Na(+)(out). Upon acetylcholine binding, the AChR responds by an extensive change in conformation that affects all subunits and leads to opening of an ion-conducting channel across the plasma membrane. The polypeptide is Acetylcholine receptor subunit alpha (CHRNA1) (Felis catus (Cat)).